The sequence spans 234 residues: Small ribosomal subunit protein uS3 (234 aa).

One can recognise a KH type-2 domain in the interval 39 to 108; that stretch reads IRKFVKKKLF…TVIVNVVEVK (70 aa). Positions 212–234 are disordered; that stretch reads KGKNEETNNETADNSRGRRREAK.

Belongs to the universal ribosomal protein uS3 family. Part of the 30S ribosomal subunit. Forms a tight complex with proteins S10 and S14.

Its function is as follows. Binds the lower part of the 30S subunit head. Binds mRNA in the 70S ribosome, positioning it for translation. This chain is Small ribosomal subunit protein uS3, found in Alkaliphilus metalliredigens (strain QYMF).